A 71-amino-acid chain; its full sequence is UPF0346 protein BCQ_2236 (71 aa).

Belongs to the UPF0346 family.

The chain is UPF0346 protein BCQ_2236 from Bacillus cereus (strain Q1).